The chain runs to 109 residues: Large ribosomal subunit protein uL22 (109 aa).

This sequence belongs to the universal ribosomal protein uL22 family. In terms of assembly, part of the 50S ribosomal subunit.

In terms of biological role, this protein binds specifically to 23S rRNA; its binding is stimulated by other ribosomal proteins, e.g. L4, L17, and L20. It is important during the early stages of 50S assembly. It makes multiple contacts with different domains of the 23S rRNA in the assembled 50S subunit and ribosome. The globular domain of the protein is located near the polypeptide exit tunnel on the outside of the subunit, while an extended beta-hairpin is found that lines the wall of the exit tunnel in the center of the 70S ribosome. The chain is Large ribosomal subunit protein uL22 from Ralstonia nicotianae (strain ATCC BAA-1114 / GMI1000) (Ralstonia solanacearum).